A 563-amino-acid polypeptide reads, in one-letter code: Coiled-coil domain-containing protein 38 (563 aa).

Residues 1–11 (MSSNLLPTLNS) are compositionally biased toward polar residues. The interval 1 to 21 (MSSNLLPTLNSGGKVKDGSTK) is disordered. Residues 129–212 (KRNTIKKFEK…VKSEIAKTEF (84 aa)) are a coiled coil. Residues 272–311 (ESGRTAVLSEDASQGRDSQGKPSRSLTRTPEKKKSNLAES) form a disordered region. Polar residues predominate over residues 282 to 299 (DASQGRDSQGKPSRSLTR). Coiled-coil stretches lie at residues 384-415 (NIEF…KSKL) and 497-522 (RDEK…AVAQ). A disordered region spans residues 522–563 (QPKKKLGRRLVFHSKPPSGNKQQLPLVNETKTKSQEEEYFFT). The segment covering 523 to 533 (PKKKLGRRLVF) has biased composition (basic residues).

As to quaternary structure, interacts with CCDC42, CFAP53, IFT88 and ODF2. Interacts with CCDC146. Interacts with TEKT3. Interacts with ubiquitinated histone H2A.

It is found in the cytoplasm. The protein localises to the cytoskeleton. Its subcellular location is the microtubule organizing center. The protein resides in the centrosome. It localises to the perinuclear region. It is found in the cell projection. The protein localises to the cilium. Its subcellular location is the flagellum. In terms of biological role, essential for male fertility. Required for sperm flagellum biogenesis. Also required for acrosome biogenesis. Required for the attachment of developing acrosomes to the nucleus during spermiogenesis and may be involved in the transport of fibrous sheath components. This is Coiled-coil domain-containing protein 38 (CCDC38) from Homo sapiens (Human).